The chain runs to 288 residues: Energy-coupling factor transporter ATP-binding protein EcfA2 (288 aa).

The ABC transporter domain maps to 2–244 (IKFEKVNYTY…VDFLKAHELG (243 aa)). 39-46 (GHTGSGKS) lines the ATP pocket. Residue E170 is the Proton acceptor of the active site.

The protein belongs to the ABC transporter superfamily. Energy-coupling factor EcfA family. In terms of assembly, forms a stable energy-coupling factor (ECF) transporter complex composed of 2 membrane-embedded substrate-binding proteins (S component), 2 ATP-binding proteins (A component) and 2 transmembrane proteins (T component). In L.lactis forms a stable complex with EcfA' and EcfT and substrate-binding components. In E.coli forms a stable complex with EcfA, EcfT and individually with 3 tested substrate-binding components (BioY, NiaX and ThiT) with a stoichiometry of 1.1:1:1. The core ECF complex interacts with a number of substrate-specific binding components, including BioY, BioY2, HmpT, NiaX, PanT, QueT, RibU and ThiT.

The protein localises to the cell membrane. Its function is as follows. ATP-binding (A) component of a common energy-coupling factor (ECF) ABC-transporter complex. Unlike classic ABC transporters this ECF transporter provides the energy necessary to transport a number of different substrates. In this organism these probably include biotin, thiamine precursor, niacin, pantothenic acid, queuosine precursor, riboflavin and thiamine. Uptake of niacin or riboflavin into proteosomes containing EcfA1A2T and Niax or RibU has been demonstrated. Uptake requires hydrolyzable Mg-ATP and is substrate-specific; NiaX-containing proteosomes did not transport riboflavin. This chain is Energy-coupling factor transporter ATP-binding protein EcfA2, found in Lactococcus lactis subsp. cremoris (strain MG1363).